A 132-amino-acid chain; its full sequence is Small ribosomal subunit protein uS8 (132 aa).

The protein belongs to the universal ribosomal protein uS8 family. As to quaternary structure, part of the 30S ribosomal subunit. Contacts proteins S5 and S12.

Its function is as follows. One of the primary rRNA binding proteins, it binds directly to 16S rRNA central domain where it helps coordinate assembly of the platform of the 30S subunit. In Clavibacter michiganensis subsp. michiganensis (strain NCPPB 382), this protein is Small ribosomal subunit protein uS8.